A 393-amino-acid polypeptide reads, in one-letter code: Envelope glycoprotein D (393 aa).

The first 25 residues, 1-25 (MGRLTSGVGTAALLVVAVGLRVVCA), serve as a signal peptide directing secretion. The segment at 25–57 (AKYALADPSLKMADPNRFRGKNLPVLDQLTDPP) is interaction with TNFRSF14. Topologically, residues 26-340 (KYALADPSLK…HAPAAPSNPG (315 aa)) are virion surface. Position 64 (His64) interacts with Zn(2+). 3 cysteine pairs are disulfide-bonded: Cys91–Cys214, Cys131–Cys227, and Cys143–Cys152. N-linked (GlcNAc...) asparagine; by host glycans are attached at residues Asn119 and Asn146. Residue Asp240 coordinates Zn(2+). The tract at residues 261-305 (LKIAGWHGPKPPYTSTLLPPELSDTTNATQPELVPEDPEDSALLE) is profusion. Over residues 274 to 290 (TSTLLPPELSDTTNATQ) the composition is skewed to polar residues. Positions 274-301 (TSTLLPPELSDTTNATQPELVPEDPEDS) are disordered. The N-linked (GlcNAc...) asparagine; by host glycan is linked to Asn287. A helical membrane pass occupies residues 341 to 361 (LIIGALAGSTLAVLVIGGIAF). The Intravirion segment spans residues 362 to 393 (WVRRRAQMAPKRLRLPHIRDDDAPPSHQPLFY).

Belongs to the herpesviridae glycoprotein D family. As to quaternary structure, homodimer. Interacts with host receptor TNFRSF14. Interacts with host receptor NECTIN1. Interacts with host receptor NECTIN2. Interacts (via profusion domain) with gB; this interaction occurs in the absence of gH/gL. Interacts (via profusion domain) with gH/gL heterodimer; this interaction occurs in the absence of gB. Associates with the gB-gH/gL-gD complex. Interacts (via C-terminus) with UL11 tegument protein.

Its subcellular location is the virion membrane. Its function is as follows. Envelope glycoprotein that binds to the host cell entry receptors NECTIN1 and TNFRSF14/HVEM, promoting the virus entry into host cells. May trigger fusion with host membrane, by recruiting the fusion machinery composed of gB and gH/gL. The chain is Envelope glycoprotein D (gD) from Human herpesvirus 2 (strain HG52) (HHV-2).